The chain runs to 697 residues: Mediator of RNA polymerase II transcription subunit 16 (697 aa).

WD repeat units lie at residues 68-107 (GHQE…ANSW), 199-241 (RCRV…VSEK), 264-308 (DKFP…LPLN), and 622-663 (NQGS…CLPV).

The protein belongs to the Mediator complex subunit 16 family. Component of the Mediator complex.

It localises to the nucleus. Functionally, component of the Mediator complex, a coactivator involved in the regulated transcription of nearly all RNA polymerase II-dependent genes. Mediator functions as a bridge to convey information from gene-specific regulatory proteins to the basal RNA polymerase II transcription machinery. Mediator is recruited to promoters by direct interactions with regulatory proteins and serves as a scaffold for the assembly of a functional preinitiation complex with RNA polymerase II and the general transcription factors. The polypeptide is Mediator of RNA polymerase II transcription subunit 16 (med16) (Xenopus laevis (African clawed frog)).